An 87-amino-acid polypeptide reads, in one-letter code: Exodeoxyribonuclease 7 small subunit (87 aa).

It belongs to the XseB family. Heterooligomer composed of large and small subunits.

It is found in the cytoplasm. The enzyme catalyses Exonucleolytic cleavage in either 5'- to 3'- or 3'- to 5'-direction to yield nucleoside 5'-phosphates.. Its function is as follows. Bidirectionally degrades single-stranded DNA into large acid-insoluble oligonucleotides, which are then degraded further into small acid-soluble oligonucleotides. The protein is Exodeoxyribonuclease 7 small subunit of Serratia proteamaculans (strain 568).